Here is a 910-residue protein sequence, read N- to C-terminus: MVSLGGLARKIFGSSNERRVRALQPRAEQIGALEKEMQALSDEALRGKTDEFRKKLADGADLDDLLVPAFAVVREAARRVLGLRPFDVQLIGGMVLHQGAIAEMKTGEGKTLVATLPVYLNALTGKGVHVVTVNDYLARRDAEWMGRVYGFLGLTTGVIVHGLSDEERRAAYACDVTYATNNELGFDYLRDNMKYERAQMVQRGHAYAIVDEVDSILVDEARTPLIISGPLDDRSELYNTIDTFILKLEPADYEVDEKQRTATFTEEGTEKVENLLREANLFKGDSLYDVENVAIVHHLNNALKAHRLFQRDKDYIVRNDEVIIIDEFTGRMMPGRRYSDGLHQALEAKEHVKIQPENQTLASITFQNYFRMYGKLAGMTGTASTEAEEFGNIYGLDVVEIPTNLPVSRIDEDDEVYRTVEEKYRAIVREIKEAREKGQPILVGTTSIEKSEYLAERLRKDGLKDFEILNARHHEREAYIVSQAGKPGAITIATNMAGRGTDIQLGGNADMRIHQELGDMPAGPERDAKEKAIREDVQRLKEKALAAGGLYVLATERHESRRIDNQLRGRSGRQGDPGRSKFFLSLQDDLMRIFGSDRMDGMLQKLGLKEDEAIVHPWINKALEKAQKKVEARNFDIRKNLLKYDDVMNDQRKVVFEQRIELMDGENLSETVAEMRQDVIDDLVERHIPANAYAEQWDAKGLKEGVLQYLNLDLPIDEWVKEEGIAEDDIRERITEAANKAAAERAERFGPDIMTYVEKSIVLQTLDHLWREHLVNLDHLRSVIGFRGYAQRDPLNEYKSEAFELFQAMLGNLRQAVTAQLMRVELVREAAEAPPPPAPPAMQAHHLDATTGEDEFANGDTMTLARADARIVPAEQRDPNDPSTWGKVGRNEACPCGSGKKYKHCHGTFA.

ATP is bound by residues Gln89, 107-111 (GEGKT), and Asp502. The Zn(2+) site is built by Cys894, Cys896, Cys905, and His906.

It belongs to the SecA family. Monomer and homodimer. Part of the essential Sec protein translocation apparatus which comprises SecA, SecYEG and auxiliary proteins SecDF-YajC and YidC. The cofactor is Zn(2+).

It localises to the cell inner membrane. The protein resides in the cytoplasm. The catalysed reaction is ATP + H2O + cellular proteinSide 1 = ADP + phosphate + cellular proteinSide 2.. Functionally, part of the Sec protein translocase complex. Interacts with the SecYEG preprotein conducting channel. Has a central role in coupling the hydrolysis of ATP to the transfer of proteins into and across the cell membrane, serving both as a receptor for the preprotein-SecB complex and as an ATP-driven molecular motor driving the stepwise translocation of polypeptide chains across the membrane. This Chelativorans sp. (strain BNC1) protein is Protein translocase subunit SecA.